A 373-amino-acid polypeptide reads, in one-letter code: 2-oxoglutarate oxidoreductase subunit KorB (373 aa).

The segment at 26–50 is disordered; the sequence is TPSLTKNAGVPTTDQPQKGKDFTSD. Residues 27-41 are compositionally biased toward polar residues; the sequence is PSLTKNAGVPTTDQP.

As to quaternary structure, KG oxidoreductase (KOR) is composed of KorA and KorB subunits. Mg(2+) is required as a cofactor.

The catalysed reaction is 2 oxidized [2Fe-2S]-[ferredoxin] + 2-oxoglutarate + CoA = succinyl-CoA + 2 reduced [2Fe-2S]-[ferredoxin] + CO2 + H(+). Its pathway is carbohydrate metabolism; tricarboxylic acid cycle. Functionally, component of KG oxidoreductase (KOR) that catalyzes the CoA-dependent oxidative decarboxylation of 2-oxoglutarate (alpha-ketoglutarate, KG) to succinyl-CoA. Methyl viologen can act as electron acceptor in vitro; the physiologic electron acceptor is unknown. Is involved in the alternative TCA pathway that functions concurrently with fatty acid beta-oxidation. Since a growing body of evidence indicates that lipids (for example cholesterol and fatty acids) are a predominant growth substrate for M.tuberculosis during infection, flux through KOR likely represents an important step in intermediary metabolism in vivo. KOR-dependent decarboxylation of KG also appears to be an important source of CO(2) in M.tuberculosis metabolism. The chain is 2-oxoglutarate oxidoreductase subunit KorB (korB) from Mycobacterium tuberculosis (strain ATCC 25618 / H37Rv).